The following is a 373-amino-acid chain: Probable leucine aminopeptidase 1 (373 aa).

The first 18 residues, 1 to 18 (MKLLSVLALSATATSVLG), serve as a signal peptide directing secretion. Residues H176 and D195 each coordinate Zn(2+). N196 carries an N-linked (GlcNAc...) asparagine glycan. 2 residues coordinate Zn(2+): E234 and D261. N-linked (GlcNAc...) asparagine glycosylation is present at N288. A disulfide bridge connects residues C310 and C314. H343 is a binding site for Zn(2+).

Belongs to the peptidase M28 family. M28E subfamily. As to quaternary structure, monomer. The cofactor is Zn(2+).

It is found in the secreted. In terms of biological role, extracellular aminopeptidase which contributes to pathogenicity. The polypeptide is Probable leucine aminopeptidase 1 (LAP1) (Trichophyton verrucosum (strain HKI 0517)).